The chain runs to 564 residues: Potassium-transporting ATPase potassium-binding subunit (564 aa).

10 consecutive transmembrane segments (helical) span residues 4–24 (YDYLLLLAFFAIVLLPAPWLG), 67–87 (TLALLAFNLAGFLLLFAVLLL), 135–155 (IGLTVQNFVSAATGLAVLVAL), 179–199 (LYGLLPLCLVLALLLVWQGVP), 258–278 (FEVASIILIPVALVFTFGHYV), 286–306 (AIIACMLALFLIGGSTALWSE), 382–402 (AGLYGMLLFVLIAVFLAGLMI), 420–440 (LLVATLLVMPVGVLILGAIAA), 487–507 (VMIGLAMLIGRFGYILPVLAL), and 534–554 (LLLLTILLVGGLTFLPTLALG).

Belongs to the KdpA family. The system is composed of three essential subunits: KdpA, KdpB and KdpC.

It localises to the cell inner membrane. In terms of biological role, part of the high-affinity ATP-driven potassium transport (or Kdp) system, which catalyzes the hydrolysis of ATP coupled with the electrogenic transport of potassium into the cytoplasm. This subunit binds the periplasmic potassium ions and delivers the ions to the membrane domain of KdpB through an intramembrane tunnel. The protein is Potassium-transporting ATPase potassium-binding subunit of Pseudomonas entomophila (strain L48).